The primary structure comprises 448 residues: Tapasin (448 aa).

The signal sequence occupies residues 1–20; it reads MKSLSLLLAVALGLATAVSA. Over 21 to 414 the chain is Lumenal; it reads GPAVIECWFV…LSGPSLEDSI (394 aa). A disulfide bridge connects residues Cys-27 and Cys-91. An N-linked (GlcNAc...) asparagine glycan is attached at Asn-253. An Ig-like C1-type domain is found at 292–399; it reads PKVSLMPATL…PASGRSAEVT (108 aa). A disulfide bridge links Cys-315 with Cys-382. A helical membrane pass occupies residues 415–435; that stretch reads GLFLSAFFLLGLFKALGWAAV. Residues 436 to 448 lie on the Cytoplasmic side of the membrane; the sequence is YLSTCKDSKKKAE.

As to quaternary structure, heterodimer with PDIA3; disulfide-linked. Obligatory mediator for the interaction between newly assembled MHC class I molecules, calreticulin, PDIA3 and TAP. Up to 4 MHC class I/tapasin complexes bind to 1 TAP. Interacts with HLA-G-B2M complex; this interaction is required for loading of high affinity peptides. On its own or as part of MHC class I peptide loading complex, interacts with ligand-free MR1 or MR1-B2M complex, providing for stable MR1 pools ready for metabolite antigen processing.

Its subcellular location is the endoplasmic reticulum membrane. Its function is as follows. Involved in the association of MHC class I with transporter associated with antigen processing (TAP) and in the assembly of MHC class I with peptide (peptide loading). The protein is Tapasin (TAPBP) of Chlorocebus aethiops (Green monkey).